Reading from the N-terminus, the 195-residue chain is Probable DNA-directed RNA polymerase subunit delta (195 aa).

The region spanning 14 to 81 is the HTH HARE-type domain; that stretch reads FALVEIATAI…GNNEWALRAW (68 aa). 2 stretches are compositionally biased toward acidic residues: residues 120–172 and 181–195; these read DDDV…DESI and GGDD…DQEK. The interval 120–195 is disordered; that stretch reads DDDVIDYNDD…DDLSDGDQEK (76 aa).

The protein belongs to the RpoE family. In terms of assembly, RNAP is composed of a core of 2 alpha, a beta and a beta' subunits. The core is associated with a delta subunit and one of several sigma factors.

Its function is as follows. Participates in both the initiation and recycling phases of transcription. In the presence of the delta subunit, RNAP displays an increased specificity of transcription, a decreased affinity for nucleic acids, and an increased efficiency of RNA synthesis because of enhanced recycling. The protein is Probable DNA-directed RNA polymerase subunit delta of Leuconostoc mesenteroides subsp. mesenteroides (strain ATCC 8293 / DSM 20343 / BCRC 11652 / CCM 1803 / JCM 6124 / NCDO 523 / NBRC 100496 / NCIMB 8023 / NCTC 12954 / NRRL B-1118 / 37Y).